Consider the following 230-residue polypeptide: Ion-translocating oxidoreductase complex subunit E (230 aa).

The next 6 helical transmembrane spans lie at 18-38, 39-59, 69-89, 93-113, 124-144, and 182-202; these read ALVQ…ITNA, LGLG…VSLI, IPVF…LMNA, GLYL…IIIG, VLPA…VLVV, and SFLL…LIAL.

Belongs to the NqrDE/RnfAE family. As to quaternary structure, the complex is composed of six subunits: RnfA, RnfB, RnfC, RnfD, RnfE and RnfG.

The protein resides in the cell inner membrane. Functionally, part of a membrane-bound complex that couples electron transfer with translocation of ions across the membrane. This chain is Ion-translocating oxidoreductase complex subunit E, found in Vibrio parahaemolyticus serotype O3:K6 (strain RIMD 2210633).